The primary structure comprises 220 residues: Homeobox-leucine zipper protein ATHB-21 (220 aa).

Residues 26 to 48 are disordered; sequence VPQQGGEAKPTRRRKRKSKSVVV. The segment at residues 58-117 is a DNA-binding region (homeobox); the sequence is GWFRKRKLSDEQVRMLEISFEDDHKLESERKDRLASELGLDPRQVAVWFQNRRARWKNKR. Positions 118–146 are leucine-zipper; the sequence is VEDEYTKLKNAYETTVVEKCRLDSEVIHL.

Belongs to the HD-ZIP homeobox family. Class I subfamily. Widely expressed.

It is found in the nucleus. Probable transcription factor. The chain is Homeobox-leucine zipper protein ATHB-21 (ATHB-21) from Arabidopsis thaliana (Mouse-ear cress).